The following is a 233-amino-acid chain: MAPRAHVLVAVKELHAAKTRLSSVFDTADRTGLVLSMLRDTLAVVSDVATVVGVTVVTPDPAVARLARSVGAHVYADPAPVSAEDRPDEGGTEHSLNAALSAAAEHVRRNERGVDVVALQADLPSLRGGEFGEALAAARTGGRSVVVDHHGTGTAALFSCDPEIPLDPRFGPGSAKRHLESGARPLDGHWPGLRTDVDTADDLDAAQALGVGPATRAALDALEHTDPSRCGNE.

3 residues coordinate phosphoenolpyruvate: Thr154, Gly171, and Ser174.

This sequence belongs to the CofC family.

The catalysed reaction is phosphoenolpyruvate + GTP + H(+) = enolpyruvoyl-2-diphospho-5'-guanosine + diphosphate. Its pathway is cofactor biosynthesis; coenzyme F420 biosynthesis. Guanylyltransferase that catalyzes the activation of phosphoenolpyruvate (PEP) as enolpyruvoyl-2-diphospho-5'-guanosine, via the condensation of PEP with GTP. It is involved in the biosynthesis of coenzyme F420, a hydride carrier cofactor. The chain is Phosphoenolpyruvate guanylyltransferase 1 from Rhodococcus jostii (strain RHA1).